Here is a 164-residue protein sequence, read N- to C-terminus: Phosphopantetheine adenylyltransferase (164 aa).

Thr-10 is a binding site for substrate. ATP contacts are provided by residues 10 to 11 and His-18; that span reads TF. Substrate is bound by residues Lys-44, Leu-76, and Arg-90. ATP-binding positions include 91–93, Glu-101, and 126–132; these read GLR and YAFISSS.

Belongs to the bacterial CoaD family. As to quaternary structure, homohexamer. Mg(2+) serves as cofactor.

The protein resides in the cytoplasm. It carries out the reaction (R)-4'-phosphopantetheine + ATP + H(+) = 3'-dephospho-CoA + diphosphate. The protein operates within cofactor biosynthesis; coenzyme A biosynthesis; CoA from (R)-pantothenate: step 4/5. Its function is as follows. Reversibly transfers an adenylyl group from ATP to 4'-phosphopantetheine, yielding dephospho-CoA (dPCoA) and pyrophosphate. This Halorhodospira halophila (strain DSM 244 / SL1) (Ectothiorhodospira halophila (strain DSM 244 / SL1)) protein is Phosphopantetheine adenylyltransferase.